A 375-amino-acid chain; its full sequence is Queuine tRNA-ribosyltransferase (375 aa).

The active-site Proton acceptor is D89. Residues 89 to 93 (DSGGF), D143, Q187, and G214 each bind substrate. Positions 245–251 (GVGKPED) are RNA binding. The Nucleophile role is filled by D264. The interval 269-273 (TRNAR) is RNA binding; important for wobble base 34 recognition. Residues C302, C304, C307, and H333 each contribute to the Zn(2+) site.

It belongs to the queuine tRNA-ribosyltransferase family. As to quaternary structure, homodimer. Within each dimer, one monomer is responsible for RNA recognition and catalysis, while the other monomer binds to the replacement base PreQ1. Zn(2+) serves as cofactor.

It catalyses the reaction 7-aminomethyl-7-carbaguanine + guanosine(34) in tRNA = 7-aminomethyl-7-carbaguanosine(34) in tRNA + guanine. Its pathway is tRNA modification; tRNA-queuosine biosynthesis. Its function is as follows. Catalyzes the base-exchange of a guanine (G) residue with the queuine precursor 7-aminomethyl-7-deazaguanine (PreQ1) at position 34 (anticodon wobble position) in tRNAs with GU(N) anticodons (tRNA-Asp, -Asn, -His and -Tyr). Catalysis occurs through a double-displacement mechanism. The nucleophile active site attacks the C1' of nucleotide 34 to detach the guanine base from the RNA, forming a covalent enzyme-RNA intermediate. The proton acceptor active site deprotonates the incoming PreQ1, allowing a nucleophilic attack on the C1' of the ribose to form the product. After dissociation, two additional enzymatic reactions on the tRNA convert PreQ1 to queuine (Q), resulting in the hypermodified nucleoside queuosine (7-(((4,5-cis-dihydroxy-2-cyclopenten-1-yl)amino)methyl)-7-deazaguanosine). The sequence is that of Queuine tRNA-ribosyltransferase from Aliivibrio salmonicida (strain LFI1238) (Vibrio salmonicida (strain LFI1238)).